The following is a 247-amino-acid chain: Granulin (247 aa).

This sequence belongs to the polyhedrin family.

Functionally, component of the virus occlusion bodies, which are large proteinaceous structures, that protect the virus from the outside environment for extended periods until they are ingested by insect larvae. In Agrotis segetum granulosis virus (AsGV), this protein is Granulin.